We begin with the raw amino-acid sequence, 145 residues long: MKIPIKKLRSNAELPVLQTKHAAGYDVHACLDSNLILEPNKVTLVPTGLSFEIPQEYHFEIRPRSGFSTKNQILIPNSPGTIDSDYRGELMIPLFNLGNIPFVIEHGMRIAQLLIRETHYTNWELVSEFTDTTERGTGGFGSTGH.

Substrate-binding positions include Arg-64–Gly-66, Asn-77, Thr-81–Asp-83, and Met-91.

The protein belongs to the dUTPase family. Requires Mg(2+) as cofactor.

The catalysed reaction is dUTP + H2O = dUMP + diphosphate + H(+). It participates in pyrimidine metabolism; dUMP biosynthesis; dUMP from dCTP (dUTP route): step 2/2. Its function is as follows. This enzyme is involved in nucleotide metabolism: it produces dUMP, the immediate precursor of thymidine nucleotides and it decreases the intracellular concentration of dUTP so that uracil cannot be incorporated into DNA. The chain is Deoxyuridine 5'-triphosphate nucleotidohydrolase from Leptospira borgpetersenii serovar Hardjo-bovis (strain JB197).